Here is a 307-residue protein sequence, read N- to C-terminus: Oxygen-dependent coproporphyrinogen-III oxidase (307 aa).

Position 99 (Ser99) interacts with substrate. Residues His103 and His113 each contribute to the a divalent metal cation site. The Proton donor role is filled by His113. 115-117 (NVR) lines the substrate pocket. The a divalent metal cation site is built by His152 and His182. The segment at 247-282 (YVEFNLVFDRGTLFGLQSGGRTESILMSMPPVANWR) is important for dimerization. 265 to 267 (GGR) contacts substrate.

The protein belongs to the aerobic coproporphyrinogen-III oxidase family. As to quaternary structure, homodimer. A divalent metal cation serves as cofactor.

It localises to the cytoplasm. It carries out the reaction coproporphyrinogen III + O2 + 2 H(+) = protoporphyrinogen IX + 2 CO2 + 2 H2O. It participates in porphyrin-containing compound metabolism; protoporphyrin-IX biosynthesis; protoporphyrinogen-IX from coproporphyrinogen-III (O2 route): step 1/1. Involved in the heme biosynthesis. Catalyzes the aerobic oxidative decarboxylation of propionate groups of rings A and B of coproporphyrinogen-III to yield the vinyl groups in protoporphyrinogen-IX. In Burkholderia multivorans (strain ATCC 17616 / 249), this protein is Oxygen-dependent coproporphyrinogen-III oxidase.